A 438-amino-acid chain; its full sequence is Indole diterpene prenyltransferase janD (438 aa).

Position 80–81 (80–81 (FM)) interacts with L-tryptophan. Substrate contacts are provided by Arg-102, Lys-190, Arg-264, Lys-266, Tyr-268, Tyr-350, Tyr-414, and Tyr-418.

It belongs to the tryptophan dimethylallyltransferase family.

Its pathway is secondary metabolite biosynthesis. Its function is as follows. Indole diterpene prenyltransferase; part of the gene cluster that mediates the biosynthesis of the indole diterpenes janthitremanes such as shearinine K or shearinine A. The geranylgeranyl diphosphate (GGPP) synthase janG catalyzes the first step in janthitremane biosynthesis via conversion of farnesyl pyrophosphate and isopentyl pyrophosphate into geranylgeranyl pyrophosphate (GGPP). Condensation of indole-3-glycerol phosphate with GGPP by the prenyl transferase janC then forms 3-geranylgeranylindole (3-GGI). Epoxidation by the FAD-dependent monooxygenase janM leads to a epoxidized-GGI that is substrate of the terpene cyclase janB for cyclization to yield paspaline. Paspaline is subsequently converted to 13-desoxypaspaline by the cytochrome P450 monooxygenase janP, via beta-PC-M6 in a series of alpha-face oxidations. The cytochrome P450 monooxygenase janQ is proposed to carry out sequential beta-face oxidation steps at C-7 and C-13 of 13-desoxypaspaline to form paspalicine and paspalinine respectively. The indole diterpene prenyltransferase janD may then convert paspalinine into shearinine K which is substrate of janO and/or additional enzymes for oxidation and cyclization to generate shearinine A. The chain is Indole diterpene prenyltransferase janD from Penicillium janthinellum (Penicillium vitale).